The primary structure comprises 106 residues: Aspartyl/glutamyl-tRNA(Asn/Gln) amidotransferase subunit C (106 aa).

It belongs to the GatC family. As to quaternary structure, heterotrimer of A, B and C subunits.

The enzyme catalyses L-glutamyl-tRNA(Gln) + L-glutamine + ATP + H2O = L-glutaminyl-tRNA(Gln) + L-glutamate + ADP + phosphate + H(+). The catalysed reaction is L-aspartyl-tRNA(Asn) + L-glutamine + ATP + H2O = L-asparaginyl-tRNA(Asn) + L-glutamate + ADP + phosphate + 2 H(+). Functionally, allows the formation of correctly charged Asn-tRNA(Asn) or Gln-tRNA(Gln) through the transamidation of misacylated Asp-tRNA(Asn) or Glu-tRNA(Gln) in organisms which lack either or both of asparaginyl-tRNA or glutaminyl-tRNA synthetases. The reaction takes place in the presence of glutamine and ATP through an activated phospho-Asp-tRNA(Asn) or phospho-Glu-tRNA(Gln). In Lactiplantibacillus plantarum (strain ATCC BAA-793 / NCIMB 8826 / WCFS1) (Lactobacillus plantarum), this protein is Aspartyl/glutamyl-tRNA(Asn/Gln) amidotransferase subunit C.